A 97-amino-acid chain; its full sequence is Citrate lyase acyl carrier protein (97 aa).

S14 bears the O-(phosphoribosyl dephospho-coenzyme A)serine mark.

This sequence belongs to the CitD family. As to quaternary structure, oligomer with a subunit composition of (alpha,beta,gamma)6.

It is found in the cytoplasm. In terms of biological role, covalent carrier of the coenzyme of citrate lyase. This Enterobacter sp. (strain 638) protein is Citrate lyase acyl carrier protein.